Reading from the N-terminus, the 148-residue chain is Lipoprotein signal peptidase (148 aa).

Transmembrane regions (helical) follow at residues 57–77 and 88–105; these read VLLV…FIKY and VSFI…RIFY. Residues D110 and D129 contribute to the active site. A helical membrane pass occupies residues 124–144; that stretch reads TFNIADILVVVGTIMLAIFLL.

It belongs to the peptidase A8 family.

The protein resides in the cell membrane. It catalyses the reaction Release of signal peptides from bacterial membrane prolipoproteins. Hydrolyzes -Xaa-Yaa-Zaa-|-(S,diacylglyceryl)Cys-, in which Xaa is hydrophobic (preferably Leu), and Yaa (Ala or Ser) and Zaa (Gly or Ala) have small, neutral side chains.. Its pathway is protein modification; lipoprotein biosynthesis (signal peptide cleavage). This protein specifically catalyzes the removal of signal peptides from prolipoproteins. The sequence is that of Lipoprotein signal peptidase from Clostridium novyi (strain NT).